Reading from the N-terminus, the 425-residue chain is Serine--tRNA ligase (425 aa).

230–232 (TAE) provides a ligand contact to L-serine. Residue 261-263 (RSE) coordinates ATP. E284 provides a ligand contact to L-serine. 348–351 (EISS) lines the ATP pocket. S384 provides a ligand contact to L-serine.

Belongs to the class-II aminoacyl-tRNA synthetase family. Type-1 seryl-tRNA synthetase subfamily. Homodimer. The tRNA molecule binds across the dimer.

Its subcellular location is the cytoplasm. The catalysed reaction is tRNA(Ser) + L-serine + ATP = L-seryl-tRNA(Ser) + AMP + diphosphate + H(+). The enzyme catalyses tRNA(Sec) + L-serine + ATP = L-seryl-tRNA(Sec) + AMP + diphosphate + H(+). It functions in the pathway aminoacyl-tRNA biosynthesis; selenocysteinyl-tRNA(Sec) biosynthesis; L-seryl-tRNA(Sec) from L-serine and tRNA(Sec): step 1/1. In terms of biological role, catalyzes the attachment of serine to tRNA(Ser). Is also able to aminoacylate tRNA(Sec) with serine, to form the misacylated tRNA L-seryl-tRNA(Sec), which will be further converted into selenocysteinyl-tRNA(Sec). This is Serine--tRNA ligase from Streptococcus pyogenes serotype M12 (strain MGAS2096).